The following is a 255-amino-acid chain: tRNA (guanine-N(7)-)-methyltransferase (255 aa).

Positions Met-1–Trp-29 are disordered. S-adenosyl-L-methionine-binding residues include Glu-86, Glu-111, Asp-138, and Asp-160. Asp-160 is a catalytic residue. Residues Lys-164, Asp-196, and Thr-233–Glu-236 each bind substrate.

The protein belongs to the class I-like SAM-binding methyltransferase superfamily. TrmB family.

It carries out the reaction guanosine(46) in tRNA + S-adenosyl-L-methionine = N(7)-methylguanosine(46) in tRNA + S-adenosyl-L-homocysteine. It functions in the pathway tRNA modification; N(7)-methylguanine-tRNA biosynthesis. Catalyzes the formation of N(7)-methylguanine at position 46 (m7G46) in tRNA. The chain is tRNA (guanine-N(7)-)-methyltransferase from Ruegeria sp. (strain TM1040) (Silicibacter sp.).